Reading from the N-terminus, the 1048-residue chain is Pleckstrin homology domain-containing family A member 6 (1048 aa).

A compositionally biased stretch (polar residues) spans 1–22; the sequence is MSNKTGGKRPATTNSDIPNHNM. The segment at 1 to 36 is disordered; it reads MSNKTGGKRPATTNSDIPNHNMVSEVPPERPSVRAT. Residues 59–158 enclose the PH domain; the sequence is PVTKAGWLFK…WIQAMGEAAR (100 aa). Disordered stretches follow at residues 165–318 and 448–467; these read QKSV…MNQL and SLQP…SYSR. Positions 201 to 233 are enriched in basic and acidic residues; sequence PEPEAKTRGEGDGRGCEKAERRPERPEVKKEPP. Phosphoserine occurs at positions 247 and 251. Positions 267-290 are enriched in polar residues; that stretch reads AQPNGWQYHSPSRPGSTAFPSQDG. Phosphoserine is present on residues Ser314, Ser459, Ser461, and Ser472. Residues 456 to 465 show a composition bias toward polar residues; sequence VPRSPSQGSY. At Tyr492 the chain carries Phosphotyrosine. Residue Ser591 is modified to Phosphoserine. The segment at 663 to 746 is disordered; sequence RKNNPSRGTD…HQTLPLDTPR (84 aa). Over residues 687–711 the composition is skewed to low complexity; that stretch reads SSNSPASPLSSASLTSPLSPFSLVS. The segment covering 712-721 has biased composition (polar residues); sequence GSQGSPTKPG. At Thr744 the chain carries Phosphothreonine. Ser777 is modified (phosphoserine). Thr784 carries the post-translational modification Phosphothreonine. The interval 793–858 is disordered; sequence ASGLTNGLSS…PAPDPSPRPA (66 aa). Over residues 794–803 the composition is skewed to polar residues; it reads SGLTNGLSSQ. Ser801 carries the phosphoserine modification. Basic and acidic residues predominate over residues 815-827; that stretch reads GKVKMSVEEQIDR. A compositionally biased stretch (basic residues) spans 828 to 842; that stretch reads MRRHQSGSMREKRRS. A phosphoserine mark is found at Ser848, Ser854, and Ser867. The residue at position 920 (Thr920) is a Phosphothreonine. Position 940 is a phosphoserine (Ser940). 2 disordered regions span residues 968–989 and 1005–1048; these read PIGE…QEQE and RGRM…TMRV. The residue at position 1015 (Thr1015) is a Phosphothreonine. Pro residues predominate over residues 1016–1030; the sequence is PSPPTSPASPAPPAN. At Ser1017 the chain carries Phosphoserine. Thr1020 is subject to Phosphothreonine. Phosphoserine is present on residues Ser1021 and Ser1024.

Highly expressed in heart, kidney and throughout the brain.

In Homo sapiens (Human), this protein is Pleckstrin homology domain-containing family A member 6 (PLEKHA6).